Consider the following 258-residue polypeptide: Thiamine thiazole synthase (258 aa).

Residues serine 36, 55 to 56 (ER), glycine 63, valine 127, and 153 to 155 (HVD) contribute to the NAD(+) site. Residues aspartate 155 and histidine 170 each coordinate Fe cation. NAD(+) is bound at residue methionine 224. Arginine 234 provides a ligand contact to glycine.

This sequence belongs to the THI4 family. As to quaternary structure, homooctamer; tetramer of dimers. Fe(2+) serves as cofactor.

It carries out the reaction hydrogen sulfide + glycine + NAD(+) = ADP-5-ethyl-4-methylthiazole-2-carboxylate + nicotinamide + 3 H2O + H(+). It participates in cofactor biosynthesis; thiamine diphosphate biosynthesis. Involved in the biosynthesis of the thiazole moiety of thiamine. Catalyzes the conversion of NAD and glycine to adenosine diphosphate 5-(2-hydroxyethyl)-4-methylthiazole-2-carboxylate (ADT), an adenylated thiazole intermediate, using free sulfide as a source of sulfur. This is Thiamine thiazole synthase from Desulfosudis oleivorans (strain DSM 6200 / JCM 39069 / Hxd3) (Desulfococcus oleovorans).